A 204-amino-acid chain; its full sequence is Putative 3-methyladenine DNA glycosylase (204 aa).

This sequence belongs to the DNA glycosylase MPG family.

The protein is Putative 3-methyladenine DNA glycosylase of Mycobacterium sp. (strain KMS).